Reading from the N-terminus, the 189-residue chain is Small ribosomal subunit protein uS5 (189 aa).

Residues 22–85 (FVDKLVAINR…ESAKRDLIFV (64 aa)) form the S5 DRBM domain.

The protein belongs to the universal ribosomal protein uS5 family. As to quaternary structure, part of the 30S ribosomal subunit. Contacts proteins S4 and S8.

In terms of biological role, with S4 and S12 plays an important role in translational accuracy. Its function is as follows. Located at the back of the 30S subunit body where it stabilizes the conformation of the head with respect to the body. This chain is Small ribosomal subunit protein uS5, found in Allorhizobium ampelinum (strain ATCC BAA-846 / DSM 112012 / S4) (Agrobacterium vitis (strain S4)).